A 399-amino-acid chain; its full sequence is Elongation factor Tu (399 aa).

Positions 10–204 (KPHVNIGTIG…AVDASIPEPE (195 aa)) constitute a tr-type G domain. A G1 region spans residues 19–26 (GHVDHGKT). 19-26 (GHVDHGKT) contacts GTP. Thr26 contacts Mg(2+). The interval 60 to 64 (GITIN) is G2. A G3 region spans residues 81 to 84 (DCPG). GTP is bound by residues 81–85 (DCPGH) and 136–139 (NKCD). The segment at 136–139 (NKCD) is G4. Positions 174 to 176 (SGL) are G5.

Belongs to the TRAFAC class translation factor GTPase superfamily. Classic translation factor GTPase family. EF-Tu/EF-1A subfamily. Monomer.

Its subcellular location is the cytoplasm. It carries out the reaction GTP + H2O = GDP + phosphate + H(+). GTP hydrolase that promotes the GTP-dependent binding of aminoacyl-tRNA to the A-site of ribosomes during protein biosynthesis. In Synechococcus sp. (strain CC9902), this protein is Elongation factor Tu.